Consider the following 204-residue polypeptide: Ribonuclease HII (204 aa).

The RNase H type-2 domain maps to Met-1–Leu-197. A divalent metal cation contacts are provided by Asp-6, Glu-7, and Asp-103.

This sequence belongs to the RNase HII family. Requires Mn(2+) as cofactor. Mg(2+) is required as a cofactor.

Its subcellular location is the cytoplasm. It carries out the reaction Endonucleolytic cleavage to 5'-phosphomonoester.. Functionally, endonuclease that specifically degrades the RNA of RNA-DNA hybrids. The sequence is that of Ribonuclease HII from Helicobacter pylori (strain Shi470).